The chain runs to 308 residues: Glutathione synthetase (308 aa).

Positions 117–300 (KLLPLSFPKF…LERDCWDYFE (184 aa)) constitute an ATP-grasp domain. An ATP-binding site is contributed by 143-198 (YAEYGDIVLKPLYDYGGNGVCRICGRADVGAISSAMVERYEAPLVAQQFIDDISSD). 2 residues coordinate Mg(2+): Glu271 and Asn273.

It belongs to the prokaryotic GSH synthase family. Mg(2+) is required as a cofactor. It depends on Mn(2+) as a cofactor.

It carries out the reaction gamma-L-glutamyl-L-cysteine + glycine + ATP = glutathione + ADP + phosphate + H(+). The protein operates within sulfur metabolism; glutathione biosynthesis; glutathione from L-cysteine and L-glutamate: step 2/2. In Anaplasma centrale, this protein is Glutathione synthetase.